Reading from the N-terminus, the 599-residue chain is MSRHEGVSCDSCLKSNFNGRRYKCLICYDYDLCADCYEDGVTSTRHLVEHPMQCILTRSDIELYFGGEMLASDQPQSFTCPYCKKMGFSDATLLEHVSAEHTETSLEVVCPVCAGLPGGEPNLVTDDFAGHLTLEHRQGPRELISFLDEPSAIRHGGGVRRIPGRTLGGPRTRRSNMHFSSSSGLSALSPSGRESVDPIAELLSQLSGVRRGGPPTSQLQQLQMQMQLDRQQVTASRQIDRLPRRAHPIVSTSNSNAAMAEVISGGAGGSGGSGAVGSGSGGGSGATAPPNLRTTEWPVTASFSTSASNHSQTQSSLAANSLNAREAIGTSSSAGSNVLGISVGVGGTANGNGGAGSSGVATGAGGAGQGGGQGGAAAGESFLLAQFMQPTFTEAEWAVVESMRADRSMFVQSLMLSMLCTEALDLNASDESLAKSDNVNKGQQQQQEDAEAEAQAETLLNNNADVEQQQQQQQLQPAMVRQVNQMQQTSPEDFVCDEYRYKNKKANTTQTSGTGGLGGAGATAAPGGGASGAGTKPTADRGIERRSGRPPPGEMATGSQQPQQQQQSTANPAASQQKYKQNASAATAAGNTNQIPDTR.

The ZZ-type zinc finger occupies 4 to 60; sequence HEGVSCDSCLKSNFNGRRYKCLICYDYDLCADCYEDGVTSTRHLVEHPMQCILTRSD. Positions 9, 12, 24, 27, 33, 36, 46, and 50 each coordinate Zn(2+). The C2H2-type zinc finger occupies 78 to 101; the sequence is FTCPYCKKMGFSDATLLEHVSAEH. Disordered stretches follow at residues 155–193, 229–253, 269–294, 466–486, and 507–599; these read HGGG…PSGR, DRQQ…VSTS, GSGG…NLRT, VEQQ…VNQM, and NTTQ…PDTR. 2 stretches are compositionally biased toward low complexity: residues 160 to 170 and 180 to 192; these read RRIPGRTLGGP and SSSS…SPSG. A compositionally biased stretch (gly residues) spans 269–285; it reads GSGGSGAVGSGSGGGSG. Gly residues predominate over residues 513 to 532; that stretch reads GTGGLGGAGATAAPGGGASG. Residues 538 to 547 show a composition bias toward basic and acidic residues; the sequence is TADRGIERRS. Residues 559 to 593 are compositionally biased toward low complexity; the sequence is SQQPQQQQQSTANPAASQQKYKQNASAATAAGNTN.

This sequence belongs to the KCMF1 family. As to quaternary structure, interacts with poe.

The enzyme catalyses S-ubiquitinyl-[E2 ubiquitin-conjugating enzyme]-L-cysteine + [acceptor protein]-L-lysine = [E2 ubiquitin-conjugating enzyme]-L-cysteine + N(6)-ubiquitinyl-[acceptor protein]-L-lysine.. Has intrinsic E3 ubiquitin ligase activity and promotes ubiquitination. Involved in the negative regulation of the Ras/MAPK signaling pathway in the wing by acting with the E2 enzyme Unc6 and the putative E3 ligases poe and Ufd4 to mediate the ubiquitination and proteasomal degradation of rl/MAPK. The chain is E3 ubiquitin-protein ligase Kcmf1 from Drosophila melanogaster (Fruit fly).